The sequence spans 88 residues: FXYD domain-containing ion transport regulator 4 (88 aa).

The signal sequence occupies residues 1–20 (MEEITCAFLLLLAGLPALEA). Topologically, residues 21 to 38 (SDPVDKDSPFYYDWESLQ) are extracellular. The helical transmembrane segment at 39–59 (LGGLIFGGLLCIAGIAMALSG) threads the bilayer. Over 60 to 88 (KCKCRRTHKPSSLPGKATPLIIPGSANTC) the chain is Cytoplasmic.

The protein belongs to the FXYD family. Regulatory subunit of the sodium/potassium-transporting ATPase which is composed of a catalytic alpha subunit, a non-catalytic beta subunit and a regulatory subunit. The regulatory subunit, a member of the FXYD protein family, modulates the enzymatic activity in a tissue- and isoform-specific way by changing affinities of the Na+/K+-ATPase toward Na(+), K(+) or ATP.

The protein resides in the cell membrane. Its subcellular location is the basolateral cell membrane. Associates with and regulates the activity of the sodium/potassium-transporting ATPase (NKA) which catalyzes the hydrolysis of ATP coupled with the exchange of Na(+) and K(+) ions across the plasma membrane. Increases the apparent affinity of the transporter for Na(+) and increases NKA activity. The polypeptide is FXYD domain-containing ion transport regulator 4 (Fxyd4) (Mus musculus (Mouse)).